A 293-amino-acid polypeptide reads, in one-letter code: Bifunctional protein FolD (293 aa).

NADP(+)-binding positions include 165 to 167 (GRS), Ser190, and Ile231.

It belongs to the tetrahydrofolate dehydrogenase/cyclohydrolase family. As to quaternary structure, homodimer.

It carries out the reaction (6R)-5,10-methylene-5,6,7,8-tetrahydrofolate + NADP(+) = (6R)-5,10-methenyltetrahydrofolate + NADPH. The enzyme catalyses (6R)-5,10-methenyltetrahydrofolate + H2O = (6R)-10-formyltetrahydrofolate + H(+). Its pathway is one-carbon metabolism; tetrahydrofolate interconversion. In terms of biological role, catalyzes the oxidation of 5,10-methylenetetrahydrofolate to 5,10-methenyltetrahydrofolate and then the hydrolysis of 5,10-methenyltetrahydrofolate to 10-formyltetrahydrofolate. The polypeptide is Bifunctional protein FolD (Synechococcus sp. (strain WH7803)).